Reading from the N-terminus, the 109-residue chain is Juvenile hormone esterase, isoform A (109 aa).

Belongs to the type-B carboxylesterase/lipase family. In terms of tissue distribution, fat body, the site of their biosynthesis, and the hemolymph where it is secreted.

The enzyme catalyses juvenile hormone I + H2O = juvenile hormone I carboxylate + methanol + H(+). It catalyses the reaction juvenile hormone III + H2O = juvenile hormone III carboxylate + methanol + H(+). Its function is as follows. JH esterase plays a crucial role in the decrease of JH activity in lepidopteran insects, by hydrolyzing the methyl ester of JH. It is also involved in the transport of JH. In Trichoplusia ni (Cabbage looper), this protein is Juvenile hormone esterase, isoform A.